A 334-amino-acid polypeptide reads, in one-letter code: Anthranilate phosphoribosyltransferase (334 aa).

5-phospho-alpha-D-ribose 1-diphosphate contacts are provided by residues Gly79, 82–83 (GD), Ser87, 89–92 (NIST), 107–115 (KHGNRSISS), and Ser119. Gly79 contacts anthranilate. Residue Ser91 participates in Mg(2+) binding. Anthranilate is bound at residue Asn110. Residue Arg165 participates in anthranilate binding. Mg(2+) is bound by residues Asp224 and Glu225.

It belongs to the anthranilate phosphoribosyltransferase family. Homodimer. Mg(2+) is required as a cofactor.

The enzyme catalyses N-(5-phospho-beta-D-ribosyl)anthranilate + diphosphate = 5-phospho-alpha-D-ribose 1-diphosphate + anthranilate. Its pathway is amino-acid biosynthesis; L-tryptophan biosynthesis; L-tryptophan from chorismate: step 2/5. Its function is as follows. Catalyzes the transfer of the phosphoribosyl group of 5-phosphorylribose-1-pyrophosphate (PRPP) to anthranilate to yield N-(5'-phosphoribosyl)-anthranilate (PRA). The chain is Anthranilate phosphoribosyltransferase from Streptococcus pneumoniae (strain 70585).